We begin with the raw amino-acid sequence, 62 residues long: Cytotoxin 6 (62 aa).

The first 2 residues, 1–2 (YT), serve as a signal peptide directing secretion. Cystine bridges form between Cys-5/Cys-23, Cys-16/Cys-40, Cys-44/Cys-55, and Cys-56/Cys-61.

Belongs to the three-finger toxin family. Short-chain subfamily. Type IA cytotoxin sub-subfamily. As to quaternary structure, monomer in solution; Homodimer and oligomer in the presence of negatively charged lipids forming a pore with a size ranging between 20 and 30 Angstroms. Expressed by the venom gland.

It is found in the secreted. It localises to the target cell membrane. Its function is as follows. Shows cytolytic activity on many different cells by forming pore in lipid membranes. In vivo, increases heart rate or kills the animal by cardiac arrest. In addition, it binds to heparin with high affinity, interacts with Kv channel-interacting protein 1 (KCNIP1) in a calcium-independent manner, and binds to integrin alpha-V/beta-3 (ITGAV/ITGB3) with moderate affinity. This chain is Cytotoxin 6, found in Naja sputatrix (Malayan spitting cobra).